A 148-amino-acid polypeptide reads, in one-letter code: Large ribosomal subunit protein bL9 (148 aa).

The protein belongs to the bacterial ribosomal protein bL9 family.

Functionally, binds to the 23S rRNA. In Lysinibacillus sphaericus (strain C3-41), this protein is Large ribosomal subunit protein bL9.